We begin with the raw amino-acid sequence, 312 residues long: Tumor necrosis factor receptor type 1-associated DEATH domain protein (312 aa).

The Nuclear export signal signature appears at 147–163 (LRDEELTELENALRNLT). Residues 166 to 200 (SAGGQGSDVQGTPAPLQSLAPSPPEEKPPPPQPGQ) form a disordered region. The Death domain maps to 215-305 (NLQDQQKFAR…SLAEDLLGLA (91 aa)). The segment at 222-289 (FARSVGLKWR…ATLQRLVEAL (68 aa)) is interaction with KRT14 and KRT18. A Nuclear localization signal motif is present at residues 231–244 (RKVGRSLQRSCRAL).

Stimulation of TNF-alpha receptor TNFRSF1A leads to the formation of two distinct signaling complexes. Plasma membrane-bound complex I is composed of TNFRSF1A, TRADD, RIPK1, TRAF2 and BIRC2/c-IAP1 or BIRC3 which interacts with CHUCK/IKK-alpha, IKBKB/IKK-beta and IKBKG/IKK-gamma promoting cell survival. Subsequently, TRADD, RIPK1 and TRAF2 dissociate from TNFRSF1A and form cytoplasmic complex II with FADD and caspase CASP8 promoting cell apoptosis. Within complex I, interacts with TNFRSF1A/TNFR1, TRAF2 and kinase RIPK1. Within complex I, interacts with TRPC4AP; the interaction promotes NF-kappa B activation. UXT1 associates with complex I; the interaction prevents the formation of complex II. Within complex I Interacts with scaffold protein DAB2IP. Interacts with autophagy receptor SQSTM1. Interacts with E3 ligase TRIP12. Interacts with kinase HIPK2. Interacts with keratin KRT14. Interacts with keratin KRT18. Interacts with keratins KRT16 and KRT17. Interacts with FADD. Interacts with TOMM70. Interacts with TMC8; the interaction impairs the formation of complex I and facilites complex II formation.

It localises to the nucleus. The protein resides in the cytoplasm. The protein localises to the cytoskeleton. Functionally, adapter molecule for TNFRSF1A/TNFR1 that specifically associates with the cytoplasmic domain of activated TNFRSF1A/TNFR1 mediating its interaction with FADD. Overexpression of TRADD leads to two major TNF-induced responses, apoptosis and activation of NF-kappa-B. The nuclear form acts as a tumor suppressor by preventing ubiquitination and degradation of isoform p19ARF/ARF of CDKN2A by TRIP12: acts by interacting with TRIP12, leading to disrupt interaction between TRIP12 and isoform p19ARF/ARF of CDKN2A. This chain is Tumor necrosis factor receptor type 1-associated DEATH domain protein, found in Bos taurus (Bovine).